The sequence spans 325 residues: 33 kDa chaperonin (325 aa).

Intrachain disulfides connect cysteine 260–cysteine 262 and cysteine 293–cysteine 296.

Belongs to the HSP33 family. Under oxidizing conditions two disulfide bonds are formed involving the reactive cysteines. Under reducing conditions zinc is bound to the reactive cysteines and the protein is inactive.

It localises to the cytoplasm. Functionally, redox regulated molecular chaperone. Protects both thermally unfolding and oxidatively damaged proteins from irreversible aggregation. Plays an important role in the bacterial defense system toward oxidative stress. The chain is 33 kDa chaperonin from Aquifex aeolicus (strain VF5).